Here is a 124-residue protein sequence, read N- to C-terminus: Large ribosomal subunit protein uL18 (124 aa).

Belongs to the universal ribosomal protein uL18 family. Part of the 50S ribosomal subunit; part of the 5S rRNA/L5/L18/L25 subcomplex. Contacts the 5S and 23S rRNAs.

Functionally, this is one of the proteins that bind and probably mediate the attachment of the 5S RNA into the large ribosomal subunit, where it forms part of the central protuberance. The chain is Large ribosomal subunit protein uL18 from Koribacter versatilis (strain Ellin345).